A 551-amino-acid chain; its full sequence is Hyaluronan synthase 2 (551 aa).

Topologically, residues 1–11 (MHCERFICILR) are cytoplasmic. The helical transmembrane segment at 12–32 (IIGTTLFGVSLLLGISAAYIV) threads the bilayer. Residues 33–45 (GYQFIQTDNYYFS) lie on the Extracellular side of the membrane. The chain crosses the membrane as a helical span at residues 46–66 (FGLYGAILALHLIIQSLFAFL). Residues 67–374 (EHRKMKRSLE…NSLWFHKHHL (308 aa)) lie on the Cytoplasmic side of the membrane. A helical membrane pass occupies residues 375–395 (WMTYEAVITGFFPFFLIATVI). The Extracellular portion of the chain corresponds to 396 to 402 (QLFYRGR). The chain crosses the membrane as a helical span at residues 403 to 423 (IWNILLFLLTVQLVGLIKSSF). Topologically, residues 424–429 (ASALRG) are cytoplasmic. Residues 430–450 (NIVMVFMSFYSVLYMSSLLPA) form a helical membrane-spanning segment. At 451–470 (KMFAIATINKAGWGTSGRKT) the chain is on the extracellular side. Residues 471–491 (IVVNFIGLIPITVWFTILLGG) form a helical membrane-spanning segment. Over 492-509 (VCYTIWRETKKPFSESEK) the chain is Cytoplasmic. The helical transmembrane segment at 510 to 530 (IVLAVGAILYACYWVMLLTMY) threads the bilayer. Over 531 to 551 (VSLVMKCGRRRKEPQHDLVLA) the chain is Extracellular.

This sequence belongs to the NodC/HAS family. As to quaternary structure, homodimer; dimerization promotes enzymatic activity. Requires Mg(2+) as cofactor.

The protein resides in the cell membrane. Its subcellular location is the endoplasmic reticulum membrane. The protein localises to the vesicle. It is found in the golgi apparatus membrane. It localises to the lysosome. It catalyses the reaction [hyaluronan](n) + UDP-N-acetyl-alpha-D-glucosamine = N-acetyl-beta-D-glucosaminyl-(1-&gt;4)-[hyaluronan](n) + UDP + H(+). The enzyme catalyses N-acetyl-beta-D-glucosaminyl-(1-&gt;4)-[hyaluronan](n) + UDP-alpha-D-glucuronate = [hyaluronan](n+1) + UDP + H(+). Its pathway is glycan biosynthesis; hyaluronan biosynthesis. Its function is as follows. Catalyzes the addition of GlcNAc or GlcUA monosaccharides to the nascent hyaluronan polymer. Therefore, it is essential to hyaluronan synthesis a major component of most extracellular matrices that has a structural role in tissues architectures and regulates cell adhesion, migration and differentiation. This is one of three isoenzymes responsible for cellular hyaluronan synthesis and it is particularly responsible for the synthesis of high molecular mass hyaluronan. The chain is Hyaluronan synthase 2 (has2) from Xenopus laevis (African clawed frog).